A 201-amino-acid chain; its full sequence is Sorting nexin-10 (201 aa).

The interval 8 to 125 is required for interaction with ATP6V1D; the sequence is EEFVSVWVRD…SLHLFLQSHL (118 aa). The PX domain occupies 10-127; the sequence is FVSVWVRDPR…HLFLQSHLNS (118 aa). The a 1,2-diacyl-sn-glycero-3-phospho-(1D-myo-inositol-3-phosphate) site is built by R53, K79, and R94. The tract at residues 155–201 is disordered; it reads RFPEEEEEGKKDADVEYDSESSSSGLGHSSDDSSSHGCKTSPALQES.

It belongs to the sorting nexin family. As to quaternary structure, interacts with ATP6V1D; may play a role in ciliogenesis. As to expression, expressed in femur, calvariae and teeth.

Its subcellular location is the cytoplasm. The protein localises to the endosome membrane. It localises to the cytoskeleton. The protein resides in the microtubule organizing center. It is found in the centrosome. Functionally, probable phosphoinositide-binding protein involved in protein sorting and membrane trafficking in endosomes. Plays a role in cilium biogenesis through regulation of the transport and the localization of proteins to the cilium. Required for the localization to the cilium of V-ATPase subunit ATP6V1D and ATP6V0D1, and RAB8A. Involved in osteoclast differentiation and therefore bone resorption. In Mus musculus (Mouse), this protein is Sorting nexin-10 (Snx10).